We begin with the raw amino-acid sequence, 86 residues long: Large ribosomal subunit protein eL43 (86 aa).

Zn(2+)-binding residues include Cys38, Cys41, Cys57, and Cys60. The segment at 38-60 (CPFCGSTGTVRRVSVGVWSCRKC) adopts a C4-type zinc-finger fold.

Belongs to the eukaryotic ribosomal protein eL43 family. Putative zinc-binding subfamily. In terms of assembly, part of the 50S ribosomal subunit. Zn(2+) is required as a cofactor.

Functionally, binds to the 23S rRNA. The protein is Large ribosomal subunit protein eL43 of Aeropyrum pernix (strain ATCC 700893 / DSM 11879 / JCM 9820 / NBRC 100138 / K1).